The following is a 162-amino-acid chain: Small ribosomal subunit protein uS5 (162 aa).

The S5 DRBM domain occupies 7-70; the sequence is EEKMILIRRT…YARRNMVEVP (64 aa).

Belongs to the universal ribosomal protein uS5 family. In terms of assembly, part of the 30S ribosomal subunit. Contacts proteins S4 and S8.

In terms of biological role, with S4 and S12 plays an important role in translational accuracy. Its function is as follows. Located at the back of the 30S subunit body where it stabilizes the conformation of the head with respect to the body. The polypeptide is Small ribosomal subunit protein uS5 (rpsE) (Thermus thermophilus (strain ATCC BAA-163 / DSM 7039 / HB27)).